Here is a 410-residue protein sequence, read N- to C-terminus: Dipeptidase 1 (410 aa).

A signal peptide spans 1–16 (MWTSWWLWPLVAVCTA). Zn(2+) contacts are provided by H36 and D38. N57 carries N-linked (GlcNAc...) asparagine glycosylation. C87 and C170 are joined by a disulfide. Zn(2+) is bound at residue E141. H168 is a substrate binding site. 2 residues coordinate Zn(2+): H214 and H235. An intrachain disulfide couples C242 to C274. Residues R246 and D304 each contribute to the substrate site. S384 carries the GPI-anchor amidated serine lipid modification. The propeptide at 385-410 (EAPSLHRRPGALLASLSLLLLSLGLL) is removed in mature form.

The protein belongs to the metallo-dependent hydrolases superfamily. Peptidase M19 family. Homodimer; disulfide-linked. The cofactor is Zn(2+).

The protein resides in the apical cell membrane. The protein localises to the cell projection. Its subcellular location is the microvillus membrane. It catalyses the reaction an L-aminoacyl-L-amino acid + H2O = 2 an L-alpha-amino acid. The enzyme catalyses leukotriene D4 + H2O = leukotriene E4 + glycine. The catalysed reaction is L-cystine-bis-glycine + 2 H2O = L-cystine + 2 glycine. It carries out the reaction a beta-lactam + H2O = a substituted beta-amino acid. It catalyses the reaction glycyldehydrophenylalanine + H2O = 2,3-didehydrophenylalanine + glycine. Inhibited by L-penicillamine. Beta-lactamase activity is inhibited by cilastatin. Its function is as follows. Hydrolyzes a wide range of dipeptides including the conversion of leukotriene D4 to leukotriene E4. Hydrolyzes cystinyl-bis-glycine (cys-bis-gly) formed during glutathione degradation. Also possesses beta lactamase activity and hydrolytically inactivates beta-lactam antibiotics. Independently of its dipeptidase activity, acts as an adhesion receptor for neutrophil recruitment from bloodstream into inflamed lungs and liver. The protein is Dipeptidase 1 (DPEP1) of Oryctolagus cuniculus (Rabbit).